A 582-amino-acid chain; its full sequence is Trans-activating transcriptional regulatory protein (582 aa).

Residues 101 to 131 (QPVVEQPSPSSAYHAESFEHSAGVNQPSATG) form a disordered region.

This sequence belongs to the nucleopolyhedrovirus IE-1 protein family. Homodimer. Interacts with helicase and LEF-3. Phosphorylated.

It is found in the host nucleus. In terms of biological role, regulatory transcriptional protein, which trans-activates gene expression from early baculovirus promoters. Can also trans-activate its own promoter, suggesting an autoregulation during infection of host cells. Also promotes viral DNA genome replication via the N-terminal region. The chain is Trans-activating transcriptional regulatory protein (IE1) from Autographa californica nuclear polyhedrosis virus (AcMNPV).